Consider the following 298-residue polypeptide: Zinc transport system membrane protein TroC (298 aa).

The next 8 membrane-spanning stretches (helical) occupy residues valine 16–leucine 36, leucine 41–threonine 61, isoleucine 68–methionine 88, glycine 97–valine 117, valine 144–glutamate 164, phenylalanine 187–isoleucine 207, valine 229–serine 249, and leucine 255–leucine 275.

Belongs to the ABC-3 integral membrane protein family.

It localises to the cell membrane. Functionally, part of an ATP-driven transport system TroABCD for zinc. This chain is Zinc transport system membrane protein TroC (troC), found in Treponema pallidum (strain Nichols).